A 908-amino-acid polypeptide reads, in one-letter code: DNA mismatch repair protein MutS (908 aa).

Residue 662–669 (GPNMGGKS) coordinates ATP.

This sequence belongs to the DNA mismatch repair MutS family.

Its function is as follows. This protein is involved in the repair of mismatches in DNA. It is possible that it carries out the mismatch recognition step. This protein has a weak ATPase activity. This Rhizobium johnstonii (strain DSM 114642 / LMG 32736 / 3841) (Rhizobium leguminosarum bv. viciae) protein is DNA mismatch repair protein MutS.